The following is a 217-amino-acid chain: MTLARLAPLAALLLAACAQFQPPPPEPDPLPDLMRQQTSLPQGGGVFTAGGSLSLTSDNRAFRPGDVLTVVLEETTQASKQAGTSFGKKSGAKIGPSLIGNTTFNAQVGIDANRDFNGSSSSTQQNALAGSLTVVVHRVLPNGLLQVKGEKQLTLNQGEEMLRVAGYVRVEDIDTDNRVSSLRIANARIGYSGSGALADANSPGWLMRFFASPLMPF.

The N-terminal stretch at 1 to 16 (MTLARLAPLAALLLAA) is a signal peptide. The N-palmitoyl cysteine moiety is linked to residue C17. C17 carries the S-diacylglycerol cysteine lipid modification.

This sequence belongs to the FlgH family. In terms of assembly, the basal body constitutes a major portion of the flagellar organelle and consists of four rings (L,P,S, and M) mounted on a central rod.

The protein resides in the cell outer membrane. The protein localises to the bacterial flagellum basal body. Functionally, assembles around the rod to form the L-ring and probably protects the motor/basal body from shearing forces during rotation. The sequence is that of Flagellar L-ring protein 1 from Chromobacterium violaceum (strain ATCC 12472 / DSM 30191 / JCM 1249 / CCUG 213 / NBRC 12614 / NCIMB 9131 / NCTC 9757 / MK).